Here is a 111-residue protein sequence, read N- to C-terminus: Ig kappa chain V-III region PC 3741/TEPC 111 (111 aa).

The interval 1 to 23 is framework-1; the sequence is DIVLTQSPASLAVSLGQRATISC. Residues cysteine 23 and cysteine 92 are joined by a disulfide bond. The complementarity-determining-1 stretch occupies residues 24–38; it reads RASESVDSYGNSFMH. The interval 39 to 53 is framework-2; the sequence is WYQQKPGQPPKLLIY. The segment at 54–60 is complementarity-determining-2; sequence RASNLES. Residues 61–92 form a framework-3 region; the sequence is GIPARFSGSGSRTDFTLTINPVEADDVATYYC. Positions 93-101 are complementarity-determining-3; that stretch reads QQSNEDPYT. Residues 102-111 form a framework-4 region; sequence FGGGTKLEIK.

The protein is Ig kappa chain V-III region PC 3741/TEPC 111 of Mus musculus (Mouse).